The chain runs to 528 residues: MGNCCSHGRDSADNGDALENGASASNAANSTGPTAEASVPQSKHAPPSPPPATKQGPIGPVLGRPMEDVKASYSLGKELGRGQFGVTHLCTQKATGHQFACKTIAKRKLVNKEDIEDVRREVQIMHHLTGQPNIVELKGAYEDKHSVHLVMELCAGGELFDRIIAKGHYSERAAASLLRTIVQIVHTCHSMGVIHRDLKPENFLLLNKDENSPLKATDFGLSVFYKPGEVFKDIVGSAYYIAPEVLKRKYGPEADIWSIGVMLYILLCGVPPFWAESENGIFNAILRGHVDFSSDPWPSISPQAKDLVKKMLNSDPKQRLTAAQVLNHPWIKEDGEAPDVPLDNAVMSRLKQFKAMNNFKKVALRVIAGCLSEEEIMGLKEMFKGMDTDSSGTITLEELRQGLAKQGTRLSEYEVQQLMEAADADGNGTIDYGEFIAATMHINRLDREEHLYSAFQHFDKDNSGYITMEELEQALREFGMNDGRDIKEIISEVDGDNDGRINYDEFVAMMRKGNPDPIPKKRRELSFK.

The segment at 1–65 (MGNCCSHGRD…GPIGPVLGRP (65 aa)) is disordered. The N-myristoyl glycine moiety is linked to residue Gly-2. Residues 20 to 45 (NGASASNAANSTGPTAEASVPQSKHA) are compositionally biased toward low complexity. The Protein kinase domain occupies 73–331 (YSLGKELGRG…AAQVLNHPWI (259 aa)). ATP-binding positions include 79 to 87 (LGRGQFGVT) and Lys-102. Asp-197 acts as the Proton acceptor in catalysis. Ser-237 bears the Phosphoserine mark. The tract at residues 337–367 (APDVPLDNAVMSRLKQFKAMNNFKKVALRVI) is autoinhibitory domain. EF-hand domains lie at 374-409 (EEIMGLKEMFKGMDTDSSGTITLEELRQGLAKQGTR), 410-445 (LSEYEVQQLMEAADADGNGTIDYGEFIAATMHINRL), 446-481 (DREEHLYSAFQHFDKDNSGYITMEELEQALREFGMN), and 485-516 (DIKEIISEVDGDNDGRINYDEFVAMMRKGNPD). Ca(2+)-binding residues include Asp-387, Asp-389, Ser-391, Thr-393, Glu-398, Asp-423, Asp-425, Asn-427, Thr-429, Glu-434, Asp-459, Asp-461, Ser-463, Tyr-465, Glu-470, Asp-494, Asp-496, Asp-498, Arg-500, and Glu-505.

It belongs to the protein kinase superfamily. Ser/Thr protein kinase family. CDPK subfamily.

The protein resides in the membrane. It catalyses the reaction L-seryl-[protein] + ATP = O-phospho-L-seryl-[protein] + ADP + H(+). The catalysed reaction is L-threonyl-[protein] + ATP = O-phospho-L-threonyl-[protein] + ADP + H(+). Activated by calcium. Autophosphorylation may play an important role in the regulation of the kinase activity. May play a role in signal transduction pathways that involve calcium as a second messenger. The chain is Calcium-dependent protein kinase 17 (CPK17) from Arabidopsis thaliana (Mouse-ear cress).